Consider the following 572-residue polypeptide: Sialate:O-sulfotransferase 1 (572 aa).

Over 1–14 (MAKPFFRLQKFLRR) the chain is Cytoplasmic. A helical; Signal-anchor for type II membrane protein membrane pass occupies residues 15 to 35 (TQFLLLFLTAAYLMTGSLLLL). The Extracellular portion of the chain corresponds to 36–572 (QRARVALPQA…AGLPREYVPR (537 aa)). Residue Asn-105 is glycosylated (N-linked (GlcNAc...) asparagine). The segment at 116-135 (HLTSDPQGPPTLGPEASGPA) is disordered. 2 consecutive WSC domains span residues 139-231 (QGNY…YSVG) and 242-337 (TATY…DTRC). Asn-254 and Asn-345 each carry an N-linked (GlcNAc...) asparagine glycan.

The protein belongs to the WSCD family.

The protein localises to the golgi apparatus membrane. It catalyses the reaction a ganglioside GM1b + 3'-phosphoadenylyl sulfate = an 8-O-sulfo-ganglioside GM1b + adenosine 3',5'-bisphosphate + H(+). Its function is as follows. Sialate:O-sulfotransferase which catalyzes 8-O-sulfation at the Sia-glycan level using 3'-phosphoadenosine 5'-phosphosulfate (PAPS) as a donor, forming 8-O-sulfated Sia (Sia8S)-glycans. Displays selectivity toward glycolipids such as GM1 gangliosides. In Rattus norvegicus (Rat), this protein is Sialate:O-sulfotransferase 1 (Wscd1).